A 490-amino-acid chain; its full sequence is MDPVVVLLLSLFFLLFLSLWRPSSGRGKLPPGPTPLPIIGNFFQVDMKDIRQSLTNFSKTYGPVYTLYVGSQPTVVLHGYEALKEALVDHGEEFSGRGRLPICEKVAKGQGIAFSHGNVWKATRHFTVKTLRNLGMGKGTIEDKVQEEAKWLVKELKKTNGSPCDPQFIMGCAPGNVICSIILQNRFDYEDKDFLNLIEKVNEAVKIISSPGIQVFNIFPILLDYCPGNHNIYFKNHTWLKSYLLEKIKEHEESLDVSNPRDFIDYFLIERNQENANQWMNYTLEHLAIMVTDLFFAGIETVSSTMRFALLLLMKYPHVTAKVQEEIDHVIGRHRSPCMQDRSHMPYTNAMVHEVQRYIDIGPNGLLHEVTCDTKFRNYFIPKGTAVLTSLTSVLHDSKEFPNPEMFDPGHFLDENGNFKKSDYFIPFSAGKRMCLGESLARMELFLFLTTILQNFKLKSLVDPKDINTTPICSSLSSVPPTFQMRFIPL.

Residue Cys435 participates in heme binding.

This sequence belongs to the cytochrome P450 family. The cofactor is heme. Liver, and to a lesser extent in prostate, kidney, heart and brain.

The protein localises to the endoplasmic reticulum membrane. It localises to the microsome membrane. The enzyme catalyses an organic molecule + reduced [NADPH--hemoprotein reductase] + O2 = an alcohol + oxidized [NADPH--hemoprotein reductase] + H2O + H(+). Functionally, cytochromes P450 are a group of heme-thiolate monooxygenases. In liver microsomes, this enzyme is involved in an NADPH-dependent electron transport pathway. It oxidizes a variety of structurally unrelated compounds, including steroids, fatty acids, and xenobiotics. This is Cytochrome P450 2C13, male-specific (Cyp2c13) from Rattus norvegicus (Rat).